A 685-amino-acid polypeptide reads, in one-letter code: Potassium-transporting ATPase ATP-binding subunit (685 aa).

4 helical membrane passes run 36–56 (MFVVEVGFFVTILLTIFPSIF), 68–88 (LIVTIILFITVLFANFAESVA), 218–238 (IALNTILVSLTLIFLIVLVAL), and 255–275 (IALLVCLIPTTIGGLLSAIGI). Asp306 (4-aspartylphosphate intermediate) is an active-site residue. ATP is bound by residues Asp343, Glu347, 375–382 (FTAQTRMS), and Lys394. Mg(2+) contacts are provided by Asp517 and Asp521. Helical transmembrane passes span 587–607 (FAIIPAIFTIAIPKMQLMNIM), 615–635 (AILSALIFNAIIIPALIPIAM), and 654–674 (IVFGFGGIIVPFVGIKIIDMI).

Belongs to the cation transport ATPase (P-type) (TC 3.A.3) family. Type IA subfamily. In terms of assembly, the system is composed of three essential subunits: KdpA, KdpB and KdpC.

The protein resides in the cell membrane. The enzyme catalyses K(+)(out) + ATP + H2O = K(+)(in) + ADP + phosphate + H(+). Its function is as follows. Part of the high-affinity ATP-driven potassium transport (or Kdp) system, which catalyzes the hydrolysis of ATP coupled with the electrogenic transport of potassium into the cytoplasm. This subunit is responsible for energy coupling to the transport system and for the release of the potassium ions to the cytoplasm. The chain is Potassium-transporting ATPase ATP-binding subunit from Clostridium acetobutylicum (strain ATCC 824 / DSM 792 / JCM 1419 / IAM 19013 / LMG 5710 / NBRC 13948 / NRRL B-527 / VKM B-1787 / 2291 / W).